Reading from the N-terminus, the 180-residue chain is Crossover junction endodeoxyribonuclease RuvC (180 aa).

Active-site residues include Asp7, Glu66, and Asp138. Mg(2+) is bound by residues Asp7, Glu66, and Asp138.

It belongs to the RuvC family. As to quaternary structure, homodimer which binds Holliday junction (HJ) DNA. The HJ becomes 2-fold symmetrical on binding to RuvC with unstacked arms; it has a different conformation from HJ DNA in complex with RuvA. In the full resolvosome a probable DNA-RuvA(4)-RuvB(12)-RuvC(2) complex forms which resolves the HJ. Mg(2+) serves as cofactor.

Its subcellular location is the cytoplasm. The catalysed reaction is Endonucleolytic cleavage at a junction such as a reciprocal single-stranded crossover between two homologous DNA duplexes (Holliday junction).. In terms of biological role, the RuvA-RuvB-RuvC complex processes Holliday junction (HJ) DNA during genetic recombination and DNA repair. Endonuclease that resolves HJ intermediates. Cleaves cruciform DNA by making single-stranded nicks across the HJ at symmetrical positions within the homologous arms, yielding a 5'-phosphate and a 3'-hydroxyl group; requires a central core of homology in the junction. The consensus cleavage sequence is 5'-(A/T)TT(C/G)-3'. Cleavage occurs on the 3'-side of the TT dinucleotide at the point of strand exchange. HJ branch migration catalyzed by RuvA-RuvB allows RuvC to scan DNA until it finds its consensus sequence, where it cleaves and resolves the cruciform DNA. The protein is Crossover junction endodeoxyribonuclease RuvC of Burkholderia vietnamiensis (strain G4 / LMG 22486) (Burkholderia cepacia (strain R1808)).